Here is a 386-residue protein sequence, read N- to C-terminus: Patatin-06 (386 aa).

The N-terminal stretch at 1–23 (MATTKSFLILFFMILATTSSTCA) is a signal peptide. Positions 32-229 (LSIDGGGIKG…TVGDPALLSL (198 aa)) constitute a PNPLA domain. Residues 36-41 (GGGIKG) carry the GXGXXG motif. The GXSXG signature appears at 75 to 79 (GTSTG). Catalysis depends on Ser77, which acts as the Nucleophile. Asn115 carries N-linked (GlcNAc...) asparagine glycosylation. Asp215 serves as the catalytic Proton acceptor. The short motif at 215-217 (DGG) is the DGA/G element. Residues 321 to 384 (ENALTGTTTE…NRKKLRANKA (64 aa)) adopt a coiled-coil conformation.

Belongs to the patatin family. As to expression, tuber.

The protein resides in the vacuole. Functionally, probable lipolytic acyl hydrolase (LAH), an activity which is thought to be involved in the response of tubers to pathogens. This Solanum tuberosum (Potato) protein is Patatin-06.